The sequence spans 248 residues: Triosephosphate isomerase (248 aa).

9-11 (NWK) contacts substrate. His94 (electrophile) is an active-site residue. Glu166 serves as the catalytic Proton acceptor. Residues Gly172, Ser212, and 233-234 (GG) contribute to the substrate site.

The protein belongs to the triosephosphate isomerase family. As to quaternary structure, homodimer.

The protein localises to the cytoplasm. The enzyme catalyses D-glyceraldehyde 3-phosphate = dihydroxyacetone phosphate. It participates in carbohydrate biosynthesis; gluconeogenesis. The protein operates within carbohydrate degradation; glycolysis; D-glyceraldehyde 3-phosphate from glycerone phosphate: step 1/1. Functionally, involved in the gluconeogenesis. Catalyzes stereospecifically the conversion of dihydroxyacetone phosphate (DHAP) to D-glyceraldehyde-3-phosphate (G3P). This chain is Triosephosphate isomerase, found in Clostridium perfringens (strain ATCC 13124 / DSM 756 / JCM 1290 / NCIMB 6125 / NCTC 8237 / Type A).